A 340-amino-acid polypeptide reads, in one-letter code: Armadillo repeat-containing protein 12 (340 aa).

Residues 1-101 (MGKTIPRFLE…NITRCVYLLE (101 aa)) are interaction with TBC1D15. ARM repeat units follow at residues 100–139 (LEAEASSCTMDDIDLVADMLDEKDNSVKIQALNALKAFSG), 179–218 (LPDYVHPQLRRVMPALMEIIQSDCILAQVQAVRLLSYLAQ), and 278–318 (SLHE…SLQC). Positions 321 to 340 (DLGSRPSSCRPSHSCFKTGK) are disordered. Low complexity predominate over residues 324-340 (SRPSSCRPSHSCFKTGK).

In terms of assembly, interacts with TBC1D15, TBC1D21, GK2 and IMMT. Interacts with VDAC2 and VDAC3 in a TBC1D21-dependent manner. Interacts (via ARM domains) with RBBP4. As to expression, testis-specific.

The protein localises to the nucleus. The protein resides in the mitochondrion outer membrane. Its function is as follows. Essential for male fertility and sperm mitochondrial sheath formation. Required for proper mitochondrial elongation and coiling along the flagellum during the formation of the mitochondrial sheath. Facilitates the growth and aggressiveness of neuroblastoma cells. Increases the EZH2 activity and H3K27me3 levels in a RBBP4-dependent manner, and facilitates the enrichment of polycomb repressive complex 2 and H3K27me3 on gene promoters, resulting in transcriptional repression of tumor suppressors affecting the proliferation, invasion, and metastasis of tumor cells. The sequence is that of Armadillo repeat-containing protein 12 (Armc12) from Mus musculus (Mouse).